A 312-amino-acid chain; its full sequence is Deoxyribonuclease-1-like 1 (312 aa).

A signal peptide spans 1–35; that stretch reads MPSGQPVFPRRVPDAYIAMRGLVVASLLILLVGGT. N-linked (GlcNAc...) asparagine glycosylation occurs at Asn-102. Glu-113 is an active-site residue. N-linked (GlcNAc...) asparagine glycosylation occurs at Asn-133. The active site involves His-164. Cys-203 and Cys-240 are disulfide-bonded. Asn-239 is a glycosylation site (N-linked (GlcNAc...) asparagine).

It belongs to the DNase I family.

It is found in the endoplasmic reticulum. This is Deoxyribonuclease-1-like 1 (Dnase1l1) from Rattus norvegicus (Rat).